We begin with the raw amino-acid sequence, 1962 residues long: Myosin heavy chain, muscle (1962 aa).

A Myosin N-terminal SH3-like domain is found at 33–82 (DSKKSCWIPDEKEGYLLGEIKATKGDIVSVGLQGGEVRDIKSEKVEKVNP). Residues 86 to 777 (EKIEDMADMT…VLGQMEEFRD (692 aa)) form the Myosin motor domain. 179–186 (GESGAGKT) contacts ATP. The segment at 656–678 (LNSLMTTLRSTQPHFVRCIIPNE) is actin-binding. The IQ domain maps to 780-809 (LGKIMSWMQAWARGYLSRKGFKKLQEQRVA). Positions 802-1927 (KLQEQRVALK…KFRAKGRAGS (1126 aa)) form a coiled coil. 2 disordered regions span residues 1822–1862 (ENEL…NHER) and 1922–1962 (KGRA…ENEF).

Belongs to the TRAFAC class myosin-kinesin ATPase superfamily. Myosin family. Muscle myosin is a hexameric protein that consists of 2 heavy chain subunits (MHC), 2 alkali light chain subunits (MLC) and 2 regulatory light chain subunits (MLC-2). As to expression, expressed in larval and adult muscles. Isoforms containing exon 9a are expressed in indirect flight muscles, exons 9a and 9b are expressed in jump muscles, exons 9b and 9c are expressed in other larval and adult muscles.

Its subcellular location is the cytoplasm. The protein resides in the myofibril. In terms of biological role, muscle contraction. The protein is Myosin heavy chain, muscle (Mhc) of Drosophila melanogaster (Fruit fly).